A 330-amino-acid chain; its full sequence is Phenylalanine--tRNA ligase alpha subunit (330 aa).

Position 255 (E255) interacts with Mg(2+).

This sequence belongs to the class-II aminoacyl-tRNA synthetase family. Phe-tRNA synthetase alpha subunit type 1 subfamily. Tetramer of two alpha and two beta subunits. It depends on Mg(2+) as a cofactor.

Its subcellular location is the cytoplasm. The enzyme catalyses tRNA(Phe) + L-phenylalanine + ATP = L-phenylalanyl-tRNA(Phe) + AMP + diphosphate + H(+). The chain is Phenylalanine--tRNA ligase alpha subunit from Acinetobacter baumannii (strain AYE).